The chain runs to 356 residues: Peptide chain release factor 1 (356 aa).

Residue Gln-230 is modified to N5-methylglutamine. A compositionally biased stretch (basic and acidic residues) spans 279–289 (ALDSARSEARK). The interval 279 to 299 (ALDSARSEARKSQVGSGDRSE) is disordered.

Belongs to the prokaryotic/mitochondrial release factor family. Methylated by PrmC. Methylation increases the termination efficiency of RF1.

It is found in the cytoplasm. In terms of biological role, peptide chain release factor 1 directs the termination of translation in response to the peptide chain termination codons UAG and UAA. The chain is Peptide chain release factor 1 (prfA) from Caulobacter vibrioides (strain ATCC 19089 / CIP 103742 / CB 15) (Caulobacter crescentus).